The primary structure comprises 215 residues: Abscisic acid receptor PYL6 (215 aa).

The tract at residues 54 to 209 is START-like; the sequence is HVVGPSQCFS…NLQSLAKLAE (156 aa). Cys61 and Cys190 are oxidised to a cystine. Abscisate is bound by residues Lys90, 120 to 125, 147 to 153, and Glu174; these read AAFSLE and RLMNYKS. Residues 116-120 carry the Gate loop motif; the sequence is SGLPA. Positions 146 to 148 match the Latch loop motif; that stretch reads HRL.

This sequence belongs to the PYR/PYL/RCAR abscisic acid intracellular receptor family. In terms of assembly, monomer. Homodimer. Binds ABA on one subunit only. Interacts with HAB1, ABI1 and ABI2, and possibly with other PP2Cs. Binds to CARs protein in an ABA-independent manner, both at the plasma membrane and in the nucleus. Interacts directly with CAR1 and CAR4. Interacts with MYC2 in the nucleus. Interaction with MYC2 is increased in the presence of abscisic acid.

The protein resides in the cytoplasm. Its subcellular location is the nucleus. The protein localises to the cell membrane. In terms of biological role, receptor for abscisic acid (ABA) required for ABA-mediated responses such as stomatal closure and germination inhibition. Inhibits the activity of group-A protein phosphatases type 2C (PP2Cs) in an ABA-independent manner but more efficiently when activated by ABA. Can be activated by both (-)-ABA and (+)-ABA. May link ABA and jasmonate signaling pathways by modifying MYC2 transcriptional activity, and regulation of JAZ6 and JAZ8 gene expression by MYC2. The polypeptide is Abscisic acid receptor PYL6 (PYL6) (Arabidopsis thaliana (Mouse-ear cress)).